A 243-amino-acid polypeptide reads, in one-letter code: UPF0280 protein Memar_1519 (243 aa).

The protein belongs to the UPF0280 family.

In Methanoculleus marisnigri (strain ATCC 35101 / DSM 1498 / JR1), this protein is UPF0280 protein Memar_1519.